A 363-amino-acid polypeptide reads, in one-letter code: MRVDLFDFDLPEERIALRPVEPRDHAKLLHVRPGEPFEDRHVYDLPDLLQPGDALVFNDTKVIPAQLEGMRERTGNISQVSATLHMRVGPDRWKAFLRPAKRVKEGDRIRFGHSGTSCFLGTLDATVAEKGDSGEALLVFDLSGAVLDEAIAAVGHIPLPPYIASKRPEDERDRKDYQTVYAREEGAVAAPTAGLHFTPDLLEKIKARGIEEHFVTLHVGAGTFLPVKADDTGDHKMHAEIGHVSQRTASALNAVHERGGRIICVGTTSLRLIESATGEDGVVRPWSGATDIFITPGYRFRAVDLLMTNFHLPRSTLFMLVSAFSGLDTMHAAYNYAIADGYRFYSYGDASLLERIDHDRHSA.

This sequence belongs to the QueA family. As to quaternary structure, monomer.

It is found in the cytoplasm. It catalyses the reaction 7-aminomethyl-7-carbaguanosine(34) in tRNA + S-adenosyl-L-methionine = epoxyqueuosine(34) in tRNA + adenine + L-methionine + 2 H(+). It functions in the pathway tRNA modification; tRNA-queuosine biosynthesis. Its function is as follows. Transfers and isomerizes the ribose moiety from AdoMet to the 7-aminomethyl group of 7-deazaguanine (preQ1-tRNA) to give epoxyqueuosine (oQ-tRNA). The polypeptide is S-adenosylmethionine:tRNA ribosyltransferase-isomerase (Brucella abortus (strain S19)).